Reading from the N-terminus, the 79-residue chain is Small polypeptide DEVIL 8 (79 aa).

Over residues 1-12 the composition is skewed to polar residues; the sequence is MSRLRNSAQLQL. The disordered stretch occupies residues 1–37; it reads MSRLRNSAQLQLSKKESLGDNGGALNTTRSSRQKQGK. N-linked (GlcNAc...) asparagine glycosylation occurs at asparagine 26. A required for DVL/RTFL small polypeptide activity region spans residues 39-70; the sequence is GFTRKCGRLVKEQRARFYIMRRCVVMLICWTD. Residues 55–71 traverse the membrane as a helical segment; it reads FYIMRRCVVMLICWTDH. Asparagine 74 carries N-linked (GlcNAc...) asparagine glycosylation.

It belongs to the DVL/RTFL small polypeptides family.

Its subcellular location is the cell membrane. Its function is as follows. Small polypeptide acting as a regulatory molecule which coordinates cellular responses required for differentiation, growth and development, probably by restricting polar cell proliferation in lateral organs and coordinating socket cell recruitment and differentiation at trichome sites. The chain is Small polypeptide DEVIL 8 from Arabidopsis thaliana (Mouse-ear cress).